We begin with the raw amino-acid sequence, 80 residues long: MKARVEYIKLPRCYTKTYRKIEAKKNNDGTIELTLEETMQVISFKLPPALNAKLEQIAIKEKKSKSEIIRIALARYVENV.

In terms of biological role, essential for virus function. This is an uncharacterized protein from Sulfolobus spindle-shape virus 1 (SSV1).